A 476-amino-acid chain; its full sequence is Angiotensinogen (476 aa).

A signal peptide spans 1-24 (MAPAGVSLRATILCLLAWAGLAAG). Residue D25 is modified to Beta-decarboxylated aspartate; in form angiotensin-A. N-linked (GlcNAc...) asparagine glycans are attached at residues N38, N161, N295, and N319. C42 and C162 are oxidised to a cystine.

It belongs to the serpin family. In terms of assembly, during pregnancy, exists as a disulfide-linked 2:2 heterotetramer with the proform of PRG2 and as a complex (probably a 2:2:2 heterohexamer) with pro-PRG2 and C3dg. Post-translationally, beta-decarboxylation of Asp-25 in angiotensin-2, by mononuclear leukocytes produces alanine. The resulting peptide form, angiotensin-A, has the same affinity for the AT1 receptor as angiotensin-2, but a higher affinity for the AT2 receptor. In response to low blood pressure, the enzyme renin/REN cleaves angiotensinogen to produce angiotensin-1. Angiotensin-1 is a substrate of ACE (angiotensin converting enzyme) that removes a dipeptide to yield the physiologically active peptide angiotensin-2. Angiotensin-1 and angiotensin-2 can be further processed to generate angiotensin-3, angiotensin-4. Angiotensin 1-9 is cleaved from angiotensin-1 by ACE2 and can be further processed by ACE to produce angiotensin 1-7, angiotensin 1-5 and angiotensin 1-4. Angiotensin 1-7 has also been proposed to be cleaved from angiotensin-2 by ACE2 or from angiotensin-1 by MME (neprilysin). In terms of processing, the disulfide bond is labile. Angiotensinogen is present in the circulation in a near 40:60 ratio with the oxidized disulfide-bonded form, which preferentially interacts with receptor-bound renin. Expressed by the liver and secreted in plasma.

The protein localises to the secreted. In terms of biological role, essential component of the renin-angiotensin system (RAS), a potent regulator of blood pressure, body fluid and electrolyte homeostasis. Acts directly on vascular smooth muscle as a potent vasoconstrictor, affects cardiac contractility and heart rate through its action on the sympathetic nervous system, and alters renal sodium and water absorption through its ability to stimulate the zona glomerulosa cells of the adrenal cortex to synthesize and secrete aldosterone. Acts by binding to angiotensin receptors AGTR1 and AGTR2. Also binds the DEAR/FBXW7-AS1 receptor. Its function is as follows. Stimulates aldosterone release. Functionally, is a ligand for the G-protein coupled receptor MAS1. Has vasodilator and antidiuretic effects. Has an antithrombotic effect that involves MAS1-mediated release of nitric oxide from platelets. The polypeptide is Angiotensinogen (Homo sapiens (Human)).